Here is a 407-residue protein sequence, read N- to C-terminus: MKQKTSLFARLADGSLVLQILVGIVAGVILATVSKSGAESVAFLGELFVGALKAIAPILVFILVAASIANQKKNAKTNMRPIVILYLFGTFSAAVTAVLMSFLFPTTLALSLDAAQASPPEGIGEVIHTLLFQLVDNPVNAVLTGNYIGILAWGVGLGLALHHATDSTKQVFADVSHGVSQMVRFIIRLAPIGIFGLVSATFATTGFTAIAGYMHLLLVLLAAMAIMALIINPAIVYFKIRRNPYPLVFTCLRESGVTAFFTRSSAANIPVNMALCEKLKLHEDTYSVSIPLGATINMGGAAITITILTLAAANTMGIQVDLLTAILLSVVAGVSACGASGVAGGSLLLIPLACSLFGISNDVAMQVVAVGFIIGVIQDSAETGLNSSTDVIFTAAACEAAERKENA.

9 helical membrane-spanning segments follow: residues Gly-14 to Ser-34, Phe-48 to Ile-68, Ile-82 to Phe-102, Ala-141 to Leu-161, Ile-192 to Gly-212, Leu-216 to Val-236, Ile-290 to Leu-310, Met-316 to Ala-336, and Val-363 to Thr-383.

The protein belongs to the dicarboxylate/amino acid:cation symporter (DAACS) (TC 2.A.23) family.

The protein localises to the cell inner membrane. The enzyme catalyses L-serine(in) + Na(+)(in) = L-serine(out) + Na(+)(out). It catalyses the reaction L-threonine(in) + Na(+)(in) = L-threonine(out) + Na(+)(out). Involved in the import of serine and threonine into the cell, with the concomitant import of sodium (symport system). This chain is Serine/threonine transporter SstT, found in Shewanella halifaxensis (strain HAW-EB4).